Consider the following 273-residue polypeptide: SPRY domain-containing SOCS box protein 4 (273 aa).

Residues 1 to 34 (MGQKLSGSLKSVEVREPALRPAKRELRGAEPGRP) form a disordered region. Residues 12–34 (VEVREPALRPAKRELRGAEPGRP) show a composition bias toward basic and acidic residues. The B30.2/SPRY domain maps to 34–233 (PARLDQLLDM…MRYINGLDPE (200 aa)). Positions 234–273 (PLPLMDLCRRSIRSALGRQRLQDISSLPLPQSLKNYLQYQ) constitute an SOCS box domain.

Belongs to the SPSB family. In terms of assembly, component of the probable ECS(SPSB4) E3 ubiquitin-protein ligase complex which contains CUL5, RNF7/RBX2, Elongin BC complex and SPSB4. Interacts with CUL5; RNF7; ELOB and ELOC. Interacts with MET. Interacts (via B30.2/SPRY domain) with PAWR; this interaction occurs in association with the Elongin BC complex. Interacts with NOS2. Interacts with EPHB2.

The protein resides in the cytoplasm. The protein localises to the cytosol. It participates in protein modification; protein ubiquitination. Its function is as follows. Substrate recognition component of a SCF-like ECS (Elongin BC-CUL2/5-SOCS-box protein) E3 ubiquitin-protein ligase complex which mediates the ubiquitination and subsequent proteasomal degradation of target proteins. Negatively regulates nitric oxide (NO) production and limits cellular toxicity in activated macrophages by mediating the ubiquitination and proteasomal degradation of NOS2. Acts as a bridge which links NOS2 with the ECS E3 ubiquitin ligase complex components ELOC and CUL5. Diminishes EphB2-dependent cell repulsive responses by mediating the ubiquitination and degradation of EphB2/CTF2. Regulates cellular clock function by mediating the ubiquitin/proteasome-dependent degradation of the circadian transcriptional repressor NR1D1. The chain is SPRY domain-containing SOCS box protein 4 (SPSB4) from Homo sapiens (Human).